The following is a 534-amino-acid chain: UDP-glucuronosyltransferase 1A3 (534 aa).

Positions 1–28 (MATGLQVPLPWLATGLLLLLSVQPWAES) are cleaved as a signal peptide. 4 N-linked (GlcNAc...) asparagine glycosylation sites follow: Asn-119, Asn-142, Asn-296, and Asn-348. The chain crosses the membrane as a helical span at residues 492–508 (VIGFLLAVVLTVAFITF).

Belongs to the UDP-glycosyltransferase family. Homodimer. Homooligomer. Interacts with UGT1A1, UGT1A4, UGT1A6, UGT1A7, UGT1A8, UGT1A9 and UGT1A10 to form heterodimers. Isoform 1 interacts with isoform 2/i2 suggesting that oligomerization is involved in negative regulation of transferase activity by isoform 2. Isoform 1 also interacts with respective i2 isoforms of UGT1A1, UGT1A4, UGT1A6, UGT1A7, UGT1A8, UGT1A9 and UGT1A10. In terms of tissue distribution, expressed in liver, kidney, colon, esophagus and small intestine. As to expression, expressed in liver, kidney and colon. Not expressed in esophagus and small intestine.

It localises to the endoplasmic reticulum membrane. It catalyses the reaction glucuronate acceptor + UDP-alpha-D-glucuronate = acceptor beta-D-glucuronoside + UDP + H(+). The catalysed reaction is 17beta-estradiol + UDP-alpha-D-glucuronate = 17beta-estradiol 3-O-(beta-D-glucuronate) + UDP + H(+). It carries out the reaction 17beta-estradiol + UDP-alpha-D-glucuronate = 17beta-estradiol 17-O-(beta-D-glucuronate) + UDP + H(+). The enzyme catalyses 17alpha-estradiol + UDP-alpha-D-glucuronate = 17alpha-estradiol 3-O-(beta-D-glucuronate) + UDP + H(+). It catalyses the reaction estrone + UDP-alpha-D-glucuronate = estrone 3-O-(beta-D-glucuronate) + UDP + H(+). The catalysed reaction is chenodeoxycholate + UDP-alpha-D-glucuronate = chenodeoxycholoyl-24-O-(beta-D-glucuronate) + UDP. It carries out the reaction deoxycholate + UDP-alpha-D-glucuronate = deoxycholoyl-24-O-(beta-D-glucuronate) + UDP. The enzyme catalyses lithocholate + UDP-alpha-D-glucuronate = lithocholoyl-24-O-(beta-D-glucuronate) + UDP. It catalyses the reaction hyodeoxycholate + UDP-alpha-D-glucuronate = hyodeoxycholoyl-24-O-(beta-D-glucuronate) + UDP. The catalysed reaction is hyocholate + UDP-alpha-D-glucuronate = hyocholoyl-24-O-(beta-D-glucuronate) + UDP. It carries out the reaction calcidiol + UDP-alpha-D-glucuronate = calcidiol 25-O-(beta-D-glucuronide) + UDP + H(+). The enzyme catalyses (E)-ferulate + UDP-alpha-D-glucuronate = (E)-4-O-(beta-D-glucuronosyl)-ferulate + UDP + H(+). It catalyses the reaction (E)-ferulate + UDP-alpha-D-glucuronate = (E)-ferulic acid beta-D-glucuronate ester + UDP. The catalysed reaction is losartan + UDP-alpha-D-glucuronate = losartan-2-N-beta-D-glucuronide + UDP. It carries out the reaction candesartan + UDP-alpha-D-glucuronate = candesartan-2-N-beta-D-glucuronide + UDP. The enzyme catalyses zolasartan + UDP-alpha-D-glucuronate = zolarsartan-2-N-beta-D-glucuronide + UDP. In terms of biological role, UDP-glucuronosyltransferase (UGT) that catalyzes phase II biotransformation reactions in which lipophilic substrates are conjugated with glucuronic acid to increase the metabolite's water solubility, thereby facilitating excretion into either the urine or bile. Essential for the elimination and detoxification of drugs, xenobiotics and endogenous compounds. Catalyzes the glucuronidation of endogenous estrogen hormones such as estradiol and estrone. Contributes to bile acid (BA) detoxification by catalyzing the glucuronidation of BA substrates, which are natural detergents for dietary lipids absorption. Involved in the glucuronidation of calcidiol, which is the major circulating form of vitamin D3, essential for the regulation of calcium and phosphate homeostasis. Involved in the glucuronidation of the phytochemical ferulic acid at the phenolic or the carboxylic acid group. Involved in the glucuronidation of the AGTR1 angiotensin receptor antagonists losartan, candesartan and zolarsartan, which can inhibit the effect of angiotensin II. Its function is as follows. Lacks UDP-glucuronosyltransferase (UGT) activity but acts as a negative regulator of isoform 1. The sequence is that of UDP-glucuronosyltransferase 1A3 from Homo sapiens (Human).